A 346-amino-acid polypeptide reads, in one-letter code: Dihydroorotate dehydrogenase (quinone) (346 aa).

Residues A62–K66 and T86 contribute to the FMN site. Substrate is bound at residue K66. Residue N111–F115 participates in substrate binding. FMN is bound by residues N142 and N175. N175 contributes to the substrate binding site. S178 (nucleophile) is an active-site residue. Substrate is bound at residue N180. Positions 211 and 239 each coordinate FMN. N240–T241 is a substrate binding site. Residues G261, G289, and Y310–T311 contribute to the FMN site.

It belongs to the dihydroorotate dehydrogenase family. Type 2 subfamily. Monomer. The cofactor is FMN.

Its subcellular location is the cell membrane. The catalysed reaction is (S)-dihydroorotate + a quinone = orotate + a quinol. The protein operates within pyrimidine metabolism; UMP biosynthesis via de novo pathway; orotate from (S)-dihydroorotate (quinone route): step 1/1. Its function is as follows. Catalyzes the conversion of dihydroorotate to orotate with quinone as electron acceptor. In Thermus thermophilus (strain ATCC BAA-163 / DSM 7039 / HB27), this protein is Dihydroorotate dehydrogenase (quinone).